We begin with the raw amino-acid sequence, 222 residues long: UPF0173 metal-dependent hydrolase Kcr_0055 (222 aa).

It belongs to the UPF0173 family.

This chain is UPF0173 metal-dependent hydrolase Kcr_0055, found in Korarchaeum cryptofilum (strain OPF8).